The chain runs to 520 residues: Polycomb protein PHO (520 aa).

4 consecutive C2H2-type zinc fingers follow at residues 357-381 (IACP…LHTH), 386-408 (HVCA…QLVH), 414-438 (FQCT…VRIH), and 444-468 (FVCP…ILTH). The segment at 475–497 (TSISGKSGCSNAESNSQSEDTSA) is disordered.

Component of the Esc/E(z) complex, composed of Esc, E(z), Su(z)12, HDAC1/Rpd3 and Caf1-55. This complex is distinct from the PRC1 complex, which contains many other PcG proteins like Pc, Ph, Psc, Su(z)2. The two complexes however cooperate and interact together during the first 3 hours of development to establish PcG silencing. Component of the chromatin remodeling Ino80 complex. Interacts with Sfmbt to form a pho-repressive complex (PhoRC).

The protein resides in the nucleus. In terms of biological role, polycomb group (PcG) protein that binds to the 5'-CNGCCATNNNNG-3' sequence found in the regulatory regions of many genes. PcG proteins act by forming multiprotein complexes, which are required to maintain the transcriptionally repressive state of homeotic genes throughout development. PcG proteins are not required to initiate repression, but to maintain it during later stages of development. They probably act via the methylation of histones, rendering chromatin heritably changed in its expressibility. Probably targets the Esc/E(z) complex to DNA. Necessary but not sufficient to recruit a functional PcG repressive complex that represses target genes, suggesting that the recruitment of the distinct PRC1 complex is also required to allow a subsequent repression. Proposed core component of the chromatin remodeling Ino80 complex which is involved in transcriptional regulation, DNA replication and probably DNA repair. This chain is Polycomb protein PHO (pho), found in Drosophila melanogaster (Fruit fly).